The following is a 285-amino-acid chain: Elongation factor Ts (285 aa).

The segment at 82–85 (TDFV) is involved in Mg(2+) ion dislocation from EF-Tu.

This sequence belongs to the EF-Ts family.

It localises to the cytoplasm. Its function is as follows. Associates with the EF-Tu.GDP complex and induces the exchange of GDP to GTP. It remains bound to the aminoacyl-tRNA.EF-Tu.GTP complex up to the GTP hydrolysis stage on the ribosome. The polypeptide is Elongation factor Ts (Sodalis glossinidius (strain morsitans)).